Here is a 171-residue protein sequence, read N- to C-terminus: Crossover junction endodeoxyribonuclease RuvC (171 aa).

Catalysis depends on residues Asp7, Glu66, and Asp138. Mg(2+) is bound by residues Asp7, Glu66, and Asp138.

The protein belongs to the RuvC family. As to quaternary structure, homodimer which binds Holliday junction (HJ) DNA. The HJ becomes 2-fold symmetrical on binding to RuvC with unstacked arms; it has a different conformation from HJ DNA in complex with RuvA. In the full resolvosome a probable DNA-RuvA(4)-RuvB(12)-RuvC(2) complex forms which resolves the HJ. Mg(2+) is required as a cofactor.

Its subcellular location is the cytoplasm. The catalysed reaction is Endonucleolytic cleavage at a junction such as a reciprocal single-stranded crossover between two homologous DNA duplexes (Holliday junction).. The RuvA-RuvB-RuvC complex processes Holliday junction (HJ) DNA during genetic recombination and DNA repair. Endonuclease that resolves HJ intermediates. Cleaves cruciform DNA by making single-stranded nicks across the HJ at symmetrical positions within the homologous arms, yielding a 5'-phosphate and a 3'-hydroxyl group; requires a central core of homology in the junction. The consensus cleavage sequence is 5'-(A/T)TT(C/G)-3'. Cleavage occurs on the 3'-side of the TT dinucleotide at the point of strand exchange. HJ branch migration catalyzed by RuvA-RuvB allows RuvC to scan DNA until it finds its consensus sequence, where it cleaves and resolves the cruciform DNA. This chain is Crossover junction endodeoxyribonuclease RuvC, found in Francisella tularensis subsp. holarctica (strain FTNF002-00 / FTA).